A 388-amino-acid polypeptide reads, in one-letter code: Succinate--CoA ligase [ADP-forming] subunit beta (388 aa).

An ATP-grasp domain is found at 9 to 244 (KGVLSSFGVT…PDEYAAEELE (236 aa)). ATP-binding positions include Lys46, 53–55 (GRG), Glu99, Val102, and Glu107. Mg(2+)-binding residues include Asn199 and Asp213. Substrate contacts are provided by residues Asn264 and 320-322 (GIM).

It belongs to the succinate/malate CoA ligase beta subunit family. In terms of assembly, heterotetramer of two alpha and two beta subunits. It depends on Mg(2+) as a cofactor.

It carries out the reaction succinate + ATP + CoA = succinyl-CoA + ADP + phosphate. The catalysed reaction is GTP + succinate + CoA = succinyl-CoA + GDP + phosphate. The protein operates within carbohydrate metabolism; tricarboxylic acid cycle; succinate from succinyl-CoA (ligase route): step 1/1. In terms of biological role, succinyl-CoA synthetase functions in the citric acid cycle (TCA), coupling the hydrolysis of succinyl-CoA to the synthesis of either ATP or GTP and thus represents the only step of substrate-level phosphorylation in the TCA. The beta subunit provides nucleotide specificity of the enzyme and binds the substrate succinate, while the binding sites for coenzyme A and phosphate are found in the alpha subunit. The protein is Succinate--CoA ligase [ADP-forming] subunit beta of Anaplasma marginale (strain St. Maries).